Consider the following 195-residue polypeptide: Interferon tau-6 (195 aa).

Positions 1–23 are cleaved as a signal peptide; that stretch reads MAFVLSLLMALVLVSYGPGGSLG. 2 cysteine pairs are disulfide-bonded: cysteine 24/cysteine 122 and cysteine 52/cysteine 162. N-linked (GlcNAc...) asparagine glycosylation occurs at asparagine 101.

It belongs to the alpha/beta interferon family. IFN-alphaII subfamily. As to expression, constitutively and exclusively expressed in the mononuclear cells of the extraembryonic trophectoderm.

The protein resides in the secreted. Its function is as follows. Paracrine hormone primarily responsible for maternal recognition of pregnancy. Interacts with endometrial receptors, probably type I interferon receptors, and blocks estrogen receptor expression, preventing the estrogen-induced increase in oxytocin receptor expression in the endometrium. This results in the suppression of the pulsatile endometrial release of the luteolytic hormone prostaglandin F2-alpha, hindering the regression of the corpus luteum (luteolysis) and therefore a return to ovarian cyclicity. This, and a possible direct effect of IFN-tau on prostaglandin synthesis, leads in turn to continued ovarian progesterone secretion, which stimulates the secretion by the endometrium of the nutrients required for the growth of the conceptus. In summary, displays particularly high antiviral and antiproliferative potency concurrently with particular weak cytotoxicity, high antiluteolytic activity and immunomodulatory properties. In contrast with other IFNs, IFN-tau is not virally inducible. The sequence is that of Interferon tau-6 (IFNT6) from Ovis aries (Sheep).